The following is a 596-amino-acid chain: Inactive metallocarboxypeptidase ecm14 (596 aa).

The N-terminal stretch at 1 to 26 is a signal peptide; the sequence is MSQSHSILSSLILLVAIIFCVPHVIA. Positions 27 to 190 are excised as a propeptide; sequence VPWTTDGHAQ…SYPSMAYADA (164 aa). A glycan (N-linked (GlcNAc...) asparagine) is linked at Asn-114. The region spanning 220 to 540 is the Peptidase M14 domain; it reads NYQPLSVIIP…NVIKYFGDFL (321 aa). 2 residues coordinate Zn(2+): His-285 and Glu-288. Residues 285–288, Arg-343, and 360–361 each bind substrate; these read HARE and DR. Cys-354 and Cys-376 are joined by a disulfide. N-linked (GlcNAc...) asparagine glycosylation is present at Asn-400. His-416 is a Zn(2+) binding site. A substrate-binding site is contributed by 417 to 418; it reads SY.

Belongs to the peptidase M14 family. Zn(2+) serves as cofactor.

The protein resides in the vacuole. It is found in the secreted. In terms of biological role, inactive carboxypeptidase that may play a role in cell wall organization and biogenesis. The chain is Inactive metallocarboxypeptidase ecm14 (ecm14) from Sclerotinia sclerotiorum (strain ATCC 18683 / 1980 / Ss-1) (White mold).